Here is a 98-residue protein sequence, read N- to C-terminus: Integration host factor subunit alpha (98 aa).

A compositionally biased stretch (basic and acidic residues) spans 53–69 (DLREKSERPGRNPKTGE). A disordered region spans residues 53-73 (DLREKSERPGRNPKTGEDIPI).

The protein belongs to the bacterial histone-like protein family. In terms of assembly, heterodimer of an alpha and a beta chain.

Functionally, this protein is one of the two subunits of integration host factor, a specific DNA-binding protein that functions in genetic recombination as well as in transcriptional and translational control. In Aliivibrio fischeri (strain ATCC 700601 / ES114) (Vibrio fischeri), this protein is Integration host factor subunit alpha.